Consider the following 309-residue polypeptide: DnaJ-like protein MG002 homolog (309 aa).

The 66-residue stretch at M1–F66 folds into the J domain.

The polypeptide is DnaJ-like protein MG002 homolog (Mycoplasma pneumoniae (strain ATCC 29342 / M129 / Subtype 1) (Mycoplasmoides pneumoniae)).